The following is a 278-amino-acid chain: Probable septum site-determining protein MinC (278 aa).

The interval 104–167 (RTQQSVDPAP…ASHTPAAPQS (64 aa)) is disordered.

It belongs to the MinC family. As to quaternary structure, interacts with MinD and FtsZ.

In terms of biological role, cell division inhibitor that blocks the formation of polar Z ring septums. Rapidly oscillates between the poles of the cell to destabilize FtsZ filaments that have formed before they mature into polar Z rings. Prevents FtsZ polymerization. The protein is Probable septum site-determining protein MinC of Bordetella avium (strain 197N).